Consider the following 202-residue polypeptide: GTP cyclohydrolase 1 (202 aa).

Residues Cys90, His93, and Cys163 each contribute to the Zn(2+) site.

The protein belongs to the GTP cyclohydrolase I family. In terms of assembly, toroid-shaped homodecamer, composed of two pentamers of five dimers.

The enzyme catalyses GTP + H2O = 7,8-dihydroneopterin 3'-triphosphate + formate + H(+). It functions in the pathway cofactor biosynthesis; 7,8-dihydroneopterin triphosphate biosynthesis; 7,8-dihydroneopterin triphosphate from GTP: step 1/1. This chain is GTP cyclohydrolase 1, found in Mycolicibacterium vanbaalenii (strain DSM 7251 / JCM 13017 / BCRC 16820 / KCTC 9966 / NRRL B-24157 / PYR-1) (Mycobacterium vanbaalenii).